The following is a 630-amino-acid chain: MALVSSAPKSCLHKSLIRSTHHELKPLRRTIPTLGMCRRGKSFTPSVSMSLTTAVSDDGLQRRIGDYHSNLWDDDFIQSLSTPYGEPSYRERAEKLIGEVKEMFNSMPSEDGESMSPLNDLIERLWMVDSVERLGIDRHFKKEIKSALDYVYSYWNEKGIGCGRDSVFPDVNSTASGFRTLRLHGYSVSSEVLKVFQDQNGQFAFSPSTKERDIRTVLNLYRASFIAFPGEKVMEEAEIFSSRYLKEAVQKIPVSSLSQEIDYTLEYGWHTNMPRLETRNYLDVFGHPTSPWLKKKRTQYLDSEKLLELAKLEFNIFHSLQQKELQYLSRWWIHSGLPELTFGRHRHVEYYTLSSCIATEPKHSAFRLGFAKTCHLITVLDDIYDTFGTMDEIELFNEAVRRWNPSEKERLPEYMKEIYMALYEALTDMAREAEKTQGRDTLNYARKAWEVYLDSYTQEAKWIASGYLPTFEEYLENAKVSSGHRAAALTPLLTLDVPLPDDVLKGIDFPSRFNDLASSFLRLRGDTRCYKADRDRGEEASSISCYMKDNPGLTEEDALNHINAMINDIIKELNWELLKPDSNIPMTARKHAYEITRAFHQLYKYRDGFSVATQETKSLVRRTVLEPVPL.

The N-terminal 48 residues, 1-48, are a transit peptide targeting the chloroplast; sequence MALVSSAPKSCLHKSLIRSTHHELKPLRRTIPTLGMCRRGKSFTPSVS. 3 residues coordinate Mg(2+): aspartate 381, aspartate 385, and aspartate 533. The short motif at 381-385 is the DDXXD motif element; it reads DDIYD.

The protein belongs to the terpene synthase family. Tpsd subfamily. Mg(2+) serves as cofactor. Mn(2+) is required as a cofactor. It depends on K(+) as a cofactor.

The protein resides in the plastid. It is found in the chloroplast. The catalysed reaction is (2E)-geranyl diphosphate = (-)-beta-phellandrene + diphosphate. It participates in terpene metabolism; oleoresin biosynthesis. Functionally, converts geranyl diphosphate to four products with (-)-(4S)-beta-phellandrene (52%) as the major olefin, and lesser amounts of (-)-(1S,5S)-beta-pinene (34%), (-)-1S,5S-alpha-pinene (8.5%), and (-)-(4S)-limonene (6%). Involved in defensive oleoresin formation in conifers in response to insect attack or other injury. Involved in monoterpene (C10) olefins biosynthesis. This is Beta-phellandrene synthase, chloroplastic (ag8) from Abies grandis (Grand fir).